Reading from the N-terminus, the 522-residue chain is Biotin-dependent long chain acyl-coenzyme A carboxylase beta4 subunit (522 aa).

Residues 11–261 (TAEKLAELRE…NCFDKPPVVN (251 aa)) enclose the CoA carboxyltransferase N-terminal domain. Residues 270-503 (GHDLELDSIV…RLLLRKSMHL (234 aa)) enclose the CoA carboxyltransferase C-terminal domain.

It belongs to the AccD/PCCB family. As to quaternary structure, the biotin-dependent long-chain acyl-CoA carboxylase (LCC) complex is composed of AccA3, which contains the biotin carboxylase (BC) and biotin carboxyl carrier protein (BCCP) domains, and AccD4, which contains the carboxyl transferase (CT) domain. The complex also contains the beta5 subunit AccD5 and the epsilon subunit AccE5. The four subunits are essential for activity, but AccD5, together with AccE5, probably plays a structural role rather than a catalytic one.

In terms of biological role, component of a biotin-dependent acyl-CoA carboxylase complex. This subunit transfers the CO2 from carboxybiotin to the CoA ester substrate. When associated with the alpha3 subunit AccA3, the beta5 subunit AccD5 and the epsilon subunit AccE5, forms the LCC complex, which is involved in the carboxylation of long chain acyl-CoA. The LCC complex can use C16-C24 substrates, the highest specific activity is obtained with carboxy-C20-CoA. Has low activity with acetyl-CoA and propionyl-CoA. The polypeptide is Biotin-dependent long chain acyl-coenzyme A carboxylase beta4 subunit (Mycobacterium tuberculosis (strain ATCC 25618 / H37Rv)).